The primary structure comprises 147 residues: Calcium-regulated heat stable protein 1 (147 aa).

The span at Met-1–Pro-12 shows a compositional bias: pro residues. The segment at Met-1–Arg-49 is disordered. The residue at position 2 (Ser-2) is an N-acetylserine. 3 positions are modified to phosphoserine: Ser-30, Ser-32, and Ser-41. Thr-45 bears the Phosphothreonine mark. Residues Ser-52 and Ser-58 each carry the phosphoserine modification. A CSD domain is found at Val-62–Thr-129. Ser-146 and Ser-147 each carry phosphoserine.

In terms of assembly, homodimer. Interacts with STYX. In terms of processing, can be phosphorylated by DYRK2 (in vitro). Dephosphorylated by calcineurin in a Ca(2+) dependent manner, and probably by PP2A or PP4 serine phosphatases in cAMP- and PKC-mediated pathways. Widely expressed.

It is found in the cytoplasm. Its subcellular location is the P-body. It localises to the cytoplasmic granule. Its function is as follows. Binds mRNA and regulates the stability of target mRNA. This is Calcium-regulated heat stable protein 1 (Carhsp1) from Rattus norvegicus (Rat).